We begin with the raw amino-acid sequence, 149 residues long: Large ribosomal subunit protein bL9 (149 aa).

This sequence belongs to the bacterial ribosomal protein bL9 family.

Its function is as follows. Binds to the 23S rRNA. The polypeptide is Large ribosomal subunit protein bL9 (Fusobacterium nucleatum subsp. nucleatum (strain ATCC 25586 / DSM 15643 / BCRC 10681 / CIP 101130 / JCM 8532 / KCTC 2640 / LMG 13131 / VPI 4355)).